We begin with the raw amino-acid sequence, 178 residues long: Large ribosomal subunit protein uL6 (178 aa).

Belongs to the universal ribosomal protein uL6 family. As to quaternary structure, part of the 50S ribosomal subunit.

In terms of biological role, this protein binds to the 23S rRNA, and is important in its secondary structure. It is located near the subunit interface in the base of the L7/L12 stalk, and near the tRNA binding site of the peptidyltransferase center. The sequence is that of Large ribosomal subunit protein uL6 from Buchnera aphidicola subsp. Acyrthosiphon pisum (strain APS) (Acyrthosiphon pisum symbiotic bacterium).